Here is an 86-residue protein sequence, read N- to C-terminus: Small ribosomal subunit protein uS17 (86 aa).

It belongs to the universal ribosomal protein uS17 family. Part of the 30S ribosomal subunit.

Functionally, one of the primary rRNA binding proteins, it binds specifically to the 5'-end of 16S ribosomal RNA. The chain is Small ribosomal subunit protein uS17 from Streptococcus pyogenes serotype M6 (strain ATCC BAA-946 / MGAS10394).